The following is a 481-amino-acid chain: Glutamyl-tRNA(Gln) amidotransferase subunit A (481 aa).

Active-site charge relay system residues include Lys-76 and Ser-151. Residue Ser-175 is the Acyl-ester intermediate of the active site.

This sequence belongs to the amidase family. GatA subfamily. As to quaternary structure, heterotrimer of A, B and C subunits.

It carries out the reaction L-glutamyl-tRNA(Gln) + L-glutamine + ATP + H2O = L-glutaminyl-tRNA(Gln) + L-glutamate + ADP + phosphate + H(+). Its function is as follows. Allows the formation of correctly charged Gln-tRNA(Gln) through the transamidation of misacylated Glu-tRNA(Gln) in organisms which lack glutaminyl-tRNA synthetase. The reaction takes place in the presence of glutamine and ATP through an activated gamma-phospho-Glu-tRNA(Gln). The polypeptide is Glutamyl-tRNA(Gln) amidotransferase subunit A (Neisseria gonorrhoeae (strain NCCP11945)).